The chain runs to 284 residues: L-ribulose-5-phosphate 3-epimerase UlaE (284 aa).

It belongs to the L-ribulose-5-phosphate 3-epimerase family.

The catalysed reaction is L-ribulose 5-phosphate = L-xylulose 5-phosphate. Its pathway is cofactor degradation; L-ascorbate degradation; D-xylulose 5-phosphate from L-ascorbate: step 3/4. In terms of biological role, catalyzes the isomerization of L-xylulose-5-phosphate to L-ribulose-5-phosphate. Is involved in the anaerobic L-ascorbate utilization. The polypeptide is L-ribulose-5-phosphate 3-epimerase UlaE (Escherichia coli (strain SMS-3-5 / SECEC)).